The chain runs to 213 residues: Protein arginine N-methyltransferase SFM1 (213 aa).

A phosphoserine mark is found at Ser204 and Ser207.

The protein belongs to the class IV-like SAM-binding methyltransferase superfamily. Protein arginine N-methyltransferase SFM1 family.

The protein resides in the cytoplasm. In terms of biological role, S-adenosyl-L-methionine-dependent protein-arginine N-methyltransferase that monomethylates ribosomal protein S3 (RPS3) at 'Arg-146'. This Saccharomyces cerevisiae (strain ATCC 204508 / S288c) (Baker's yeast) protein is Protein arginine N-methyltransferase SFM1.